Reading from the N-terminus, the 192-residue chain is Late embryogenesis abundant protein 47 (192 aa).

The Nuclear localization signal (NLS) signature appears at 5 to 9; the sequence is QLQKP. 2 SMP domains span residues 68–125 and 133–190; these read ITIG…LNAR and TTLA…RINQ. Residues 146–174 form a disordered region; the sequence is LPSDKAATRKDAEGVTGAEMRNDPHLTTY. The segment covering 147-158 has biased composition (basic and acidic residues); sequence PSDKAATRKDAE.

Belongs to the LEA type SMP family.

The protein localises to the cytoplasm. The protein resides in the nucleus. LEA proteins are late embryonic proteins abundant in higher plant seed embryos. The function of those proteins is not known. The protein is Late embryogenesis abundant protein 47 of Arabidopsis thaliana (Mouse-ear cress).